Reading from the N-terminus, the 270-residue chain is uncharacterized protein (270 aa).

A signal peptide spans 1–23; the sequence is MFNFITFILFAVVCISYCHKSRG. Residues asparagine 246 and asparagine 252 are each glycosylated (N-linked (GlcNAc...) asparagine).

The protein localises to the secreted. This is an uncharacterized protein from Caenorhabditis elegans.